Reading from the N-terminus, the 425-residue chain is Apolipoprotein N-acyltransferase (425 aa).

The next 6 membrane-spanning stretches (helical) occupy residues 12–32 (LLAC…AYAI), 34–54 (NPYI…LAFL), 60–80 (SAFA…ALSF), 88–108 (LLPL…YLLL), 120–140 (FLGS…DSFF), and 142–162 (YSVF…CIFL). The region spanning 201–425 (VSTKTPQDLK…LGDILFRKRS (225 aa)) is the CN hydrolase domain. The active-site Proton acceptor is Glu-242. Residue Lys-296 is part of the active site. Cys-349 (nucleophile) is an active-site residue.

The protein belongs to the CN hydrolase family. Apolipoprotein N-acyltransferase subfamily.

It localises to the cell inner membrane. The catalysed reaction is N-terminal S-1,2-diacyl-sn-glyceryl-L-cysteinyl-[lipoprotein] + a glycerophospholipid = N-acyl-S-1,2-diacyl-sn-glyceryl-L-cysteinyl-[lipoprotein] + a 2-acyl-sn-glycero-3-phospholipid + H(+). It participates in protein modification; lipoprotein biosynthesis (N-acyl transfer). Functionally, catalyzes the phospholipid dependent N-acylation of the N-terminal cysteine of apolipoprotein, the last step in lipoprotein maturation. The protein is Apolipoprotein N-acyltransferase of Helicobacter pylori (strain ATCC 700392 / 26695) (Campylobacter pylori).